The sequence spans 316 residues: Methionyl-tRNA formyltransferase (316 aa).

112–115 (SLLP) serves as a coordination point for (6S)-5,6,7,8-tetrahydrofolate.

This sequence belongs to the Fmt family.

It carries out the reaction L-methionyl-tRNA(fMet) + (6R)-10-formyltetrahydrofolate = N-formyl-L-methionyl-tRNA(fMet) + (6S)-5,6,7,8-tetrahydrofolate + H(+). Functionally, attaches a formyl group to the free amino group of methionyl-tRNA(fMet). The formyl group appears to play a dual role in the initiator identity of N-formylmethionyl-tRNA by promoting its recognition by IF2 and preventing the misappropriation of this tRNA by the elongation apparatus. In Actinobacillus pleuropneumoniae serotype 7 (strain AP76), this protein is Methionyl-tRNA formyltransferase.